Reading from the N-terminus, the 304-residue chain is MQNFGKVAVLMGGFSSEREISLDSGTAILNALKSKGIDAYAFDPKETPLSELKERGFQTAFNILHGTYGEDGAVQGALELLGIPYTGSGVAASAIGMDKYRCKLIWQALGLPVPEFAVLYDDTDFDAVEEKLGLPMFVKPAAEGSSVGVVKVKEKGRLKSVYEELKHLQGEIIAERFIGGGEYSCPVLNGKGLPGIHIIPATEFYDYEAKYNRDDTIYQCPSEDLTEAEESLMRELAVRGAQAIGAEGCVRVDFLKDTDGKLYLLEINTLPGMTGHSLVPKSAAVTGVGFADLCIEILKAAHVG.

In terms of domain architecture, ATP-grasp spans 103-299; the sequence is KLIWQALGLP…FADLCIEILK (197 aa). An ATP-binding site is contributed by 129 to 184; sequence EEKLGLPMFVKPAAEGSSVGVVKVKEKGRLKSVYEELKHLQGEIIAERFIGGGEYS. Residues Asp-253, Glu-266, and Asn-268 each contribute to the Mg(2+) site.

This sequence belongs to the D-alanine--D-alanine ligase family. Mg(2+) is required as a cofactor. Requires Mn(2+) as cofactor.

The protein resides in the cytoplasm. The enzyme catalyses 2 D-alanine + ATP = D-alanyl-D-alanine + ADP + phosphate + H(+). It participates in cell wall biogenesis; peptidoglycan biosynthesis. Cell wall formation. In Neisseria gonorrhoeae (strain ATCC 700825 / FA 1090), this protein is D-alanine--D-alanine ligase.